The chain runs to 504 residues: Maturase K (504 aa).

Belongs to the intron maturase 2 family. MatK subfamily.

It is found in the plastid. The protein localises to the chloroplast. Usually encoded in the trnK tRNA gene intron. Probably assists in splicing its own and other chloroplast group II introns. This is Maturase K from Lupinus argenteus (Silvery lupine).